Reading from the N-terminus, the 410-residue chain is WD repeat and FYVE domain-containing protein 1 (410 aa).

6 WD repeats span residues 22-61, 66-105, 112-150, 153-192, 197-236, and 240-279; these read GHQDAVTAALLIPKEDGVITASEDRTIRVWLKRDSGQYWP, TMASPCSAMAYHHDSRRIFVGQDNGAVMEFHVSEDFNKMN, AHQNRVSAIIFSLAAEWVISTGHDKCVSWMCTRSGNMLG, FFSSWASCLQYDLDTQHAFVGDYSGQITLLKLEQNTCSVI, GHEGSIACLWWDPIQRLLFSGASDNSVIMWDIGGRKGRTL, and GHHDRVQSLCYLQLTRQLVSCSADGGIAVWNMDVSREEAP. Residues 281-352 form an FYVE-type zinc finger; the sequence is WLESDSCQKC…VCDSCYDSIK (72 aa). The Zn(2+) site is built by Cys-287, Cys-290, Cys-314, Cys-317, Cys-322, Cys-325, Cys-344, and Cys-347. The WD 7 repeat unit spans residues 364 to 403; the sequence is EGKHNISHMSMDIARGLMVTCGTDRVVKIWDMTPVVGCSL. A Phosphoserine modification is found at Ser-408.

In terms of assembly, binds PtdIns3P in vitro with high specificity over other phosphoinositides. Interacts (via WD repeat 2) with tyrosine-phosphorylated TLR3 (via TIR domain) in response to poly(I:C). Interacts with TLR4 in response to LPS. Interacts with TICAM1 in response to poly(I:C).

The protein resides in the early endosome. Functionally, positively regulates TLR3- and TLR4-mediated signaling pathways by bridging the interaction between TLR3 or TLR4 and TICAM1. Promotes TLR3/4 ligand-induced activation of transcription factors IRF3 and NF-kappa-B, as well as the production of IFN-beta and inflammatory cytokines. The polypeptide is WD repeat and FYVE domain-containing protein 1 (Wdfy1) (Mus musculus (Mouse)).